Consider the following 433-residue polypeptide: Legumain (433 aa).

Residues 1–17 (MVWKVAVFLSAALVIGA) form the signal peptide. Asparagine 91 carries an N-linked (GlcNAc...) asparagine glycan. The active site involves histidine 148. The N-linked (GlcNAc...) asparagine glycan is linked to asparagine 167. The active-site Nucleophile is cysteine 189. Residues asparagine 263 and asparagine 272 are each glycosylated (N-linked (GlcNAc...) asparagine). Positions 324 to 433 (DLEESRQLTE…SMDHVCLGHY (110 aa)) are excised as a propeptide. 2 disulfides stabilise this stretch: cysteine 378–cysteine 412 and cysteine 390–cysteine 429.

The protein belongs to the peptidase C13 family. Homodimer before autocatalytic removal of the propeptide. Monomer after autocatalytic processing. May interact with integrins. Post-translationally, activated by autocatalytic processing at pH 4.

Its subcellular location is the lysosome. The catalysed reaction is Hydrolysis of proteins and small molecule substrates at -Asn-|-Xaa- bonds.. Its function is as follows. Has a strict specificity for hydrolysis of asparaginyl bonds. Can also cleave aspartyl bonds slowly, especially under acidic conditions. Involved in the processing of proteins for MHC class II antigen presentation in the lysosomal/endosomal system. Also involved in MHC class I antigen presentation in cross-presenting dendritic cells by mediating cleavage and maturation of Perforin-2 (MPEG1), thereby promoting antigen translocation in the cytosol. Required for normal lysosomal protein degradation in renal proximal tubules. Required for normal degradation of internalized EGFR. Plays a role in the regulation of cell proliferation via its role in EGFR degradation. This chain is Legumain (LGMN), found in Pongo abelii (Sumatran orangutan).